Consider the following 850-residue polypeptide: Protein translocase subunit SecA (850 aa).

ATP-binding positions include Q87, G105–T109, and D494. 4 residues coordinate Zn(2+): C834, C836, C845, and C846.

This sequence belongs to the SecA family. In terms of assembly, monomer and homodimer. Part of the essential Sec protein translocation apparatus which comprises SecA, SecYEG and auxiliary proteins SecDF-YajC and YidC. Zn(2+) is required as a cofactor.

It localises to the cell inner membrane. It is found in the cytoplasm. The catalysed reaction is ATP + H2O + cellular proteinSide 1 = ADP + phosphate + cellular proteinSide 2.. Its function is as follows. Part of the Sec protein translocase complex. Interacts with the SecYEG preprotein conducting channel. Has a central role in coupling the hydrolysis of ATP to the transfer of proteins into and across the cell membrane, serving as an ATP-driven molecular motor driving the stepwise translocation of polypeptide chains across the membrane. In Desulfotalea psychrophila (strain LSv54 / DSM 12343), this protein is Protein translocase subunit SecA.